A 118-amino-acid chain; its full sequence is Putative pterin-4-alpha-carbinolamine dehydratase (118 aa).

This sequence belongs to the pterin-4-alpha-carbinolamine dehydratase family.

It carries out the reaction (4aS,6R)-4a-hydroxy-L-erythro-5,6,7,8-tetrahydrobiopterin = (6R)-L-erythro-6,7-dihydrobiopterin + H2O. The polypeptide is Putative pterin-4-alpha-carbinolamine dehydratase (Xanthomonas oryzae pv. oryzae (strain PXO99A)).